Reading from the N-terminus, the 147-residue chain is UPF0735 ACT domain-containing protein BPUM_2431 (147 aa).

In terms of domain architecture, ACT spans 70–145 (TLFFHLEDRS…FVEKVEILGS (76 aa)).

The protein belongs to the UPF0735 family.

This Bacillus pumilus (strain SAFR-032) protein is UPF0735 ACT domain-containing protein BPUM_2431.